We begin with the raw amino-acid sequence, 219 residues long: Uracil-DNA glycosylase (219 aa).

D61 acts as the Proton acceptor in catalysis.

Belongs to the uracil-DNA glycosylase (UDG) superfamily. UNG family.

The protein localises to the cytoplasm. The catalysed reaction is Hydrolyzes single-stranded DNA or mismatched double-stranded DNA and polynucleotides, releasing free uracil.. Its function is as follows. Excises uracil residues from the DNA which can arise as a result of misincorporation of dUMP residues by DNA polymerase or due to deamination of cytosine. This Haemophilus influenzae (strain PittEE) protein is Uracil-DNA glycosylase.